Reading from the N-terminus, the 41-residue chain is Pi-stichotoxin-Hmg5c (41 aa).

3 disulfides stabilise this stretch: C4/C37, C6/C30, and C20/C38.

It belongs to the sea anemone type 3 (BDS) potassium channel toxin family.

The protein resides in the secreted. Its subcellular location is the nematocyst. Functionally, toxin with different activities on acid-sensing ion channels (ASIC) and nicotinic acetylcholine receptors. Is able to bind T.californica muscle-type nicotinic acetylcholine receptors (nAChR) (alpha-1-beta-1-delta-epsilon (CHRNA1-CHRNB1-CHRND-CHRNE)), and human alpha-7/CHRNA7 nicotinic acetylcholine receptors. Weakly and reversibly inhibits rat homomeric ASIC1 (isoform ASIC1a) (IC(50)=1.25 uM), while it potentiates rat homomeric ASIC3 (EC(50)=1.53 uM). Rat ASIC1a current inhibition is not complete, and reaches a maximum of 86% inhibition. On rat ASIC3, does not activate the channel itself, but produces a remarkable potentiation of the transient current resulting from the acidic pulse. At the maximal applied concentration, elicits responses that are twice as high as those produced by extracellular protons. Surprisingly, shows a different activity on human ASIC3. On the truncated human ASIC3 (ASIC3-D20), the toxin weakly inhibits the channel. Molecular modeling interaction with rat ASIC1a suggests that it hinders the collapse of acidic pockets and stabilizes nonconducting channels state. In vivo, causes an anxiolytic effect on mouse behavior. Also shows an analgesic activity in an acid-induced muscle pain model, and important anti-inflammatory effect in models of acute local inflammation. In Heteractis magnifica (Magnificent sea anemone), this protein is Pi-stichotoxin-Hmg5c.